We begin with the raw amino-acid sequence, 100 residues long: Large ribosomal subunit protein bL28 (100 aa).

It belongs to the bacterial ribosomal protein bL28 family.

In Ehrlichia chaffeensis (strain ATCC CRL-10679 / Arkansas), this protein is Large ribosomal subunit protein bL28.